The chain runs to 415 residues: Multidrug resistance protein MdtA (415 aa).

An N-terminal signal peptide occupies residues 1–21 (MKGSYKSRWVIVIVVVIAAIA). The span at 31-46 (DSQSAAPGATKQAQQS) shows a compositional bias: polar residues. Disordered stretches follow at residues 31 to 56 (DSQS…GMRA) and 391 to 415 (VEAQ…GARS). Over residues 399–415 (PEEKATSREYAKKGARS) the composition is skewed to basic and acidic residues.

It belongs to the membrane fusion protein (MFP) (TC 8.A.1) family. In terms of assembly, part of a tripartite efflux system composed of MdtA, MdtB and MdtC.

Its subcellular location is the cell inner membrane. The MdtABC tripartite complex confers resistance against novobiocin and deoxycholate. This chain is Multidrug resistance protein MdtA, found in Escherichia coli O45:K1 (strain S88 / ExPEC).